Reading from the N-terminus, the 431-residue chain is Tryptophan--tRNA ligase (431 aa).

ATP contacts are provided by residues 12–14 (TPS) and 20–21 (GN). The 'HIGH' region signature appears at 13–21 (PSGTPHLGN). D145 lines the L-tryptophan pocket. ATP contacts are provided by residues 157–159 (GRD), L197, and 204–208 (KMSKS). The short motif at 204–208 (KMSKS) is the 'KMSKS' region element.

The protein belongs to the class-I aminoacyl-tRNA synthetase family. In terms of assembly, homodimer.

Its subcellular location is the cytoplasm. The catalysed reaction is tRNA(Trp) + L-tryptophan + ATP = L-tryptophyl-tRNA(Trp) + AMP + diphosphate + H(+). In terms of biological role, catalyzes the attachment of tryptophan to tRNA(Trp). This Xanthomonas campestris pv. campestris (strain ATCC 33913 / DSM 3586 / NCPPB 528 / LMG 568 / P 25) protein is Tryptophan--tRNA ligase.